We begin with the raw amino-acid sequence, 307 residues long: Methionyl-tRNA formyltransferase (307 aa).

108–111 contributes to the (6S)-5,6,7,8-tetrahydrofolate binding site; the sequence is SLLP.

Belongs to the Fmt family.

The catalysed reaction is L-methionyl-tRNA(fMet) + (6R)-10-formyltetrahydrofolate = N-formyl-L-methionyl-tRNA(fMet) + (6S)-5,6,7,8-tetrahydrofolate + H(+). Functionally, attaches a formyl group to the free amino group of methionyl-tRNA(fMet). The formyl group appears to play a dual role in the initiator identity of N-formylmethionyl-tRNA by promoting its recognition by IF2 and preventing the misappropriation of this tRNA by the elongation apparatus. The protein is Methionyl-tRNA formyltransferase of Xylella fastidiosa (strain M12).